The sequence spans 370 residues: Probable endopolygalacturonase A (370 aa).

The first 19 residues, 1 to 19, serve as a signal peptide directing secretion; sequence MPSAKPLFCLATLAGAALA. Residues 20 to 32 constitute a propeptide that is removed on maturation; the sequence is APAPSRATDFNKR. A disulfide bond links C35 and C50. 6 PbH1 repeats span residues 162-192, 193-214, 215-235, 244-265, 273-295, and 307-352; these read SDNL…DISE, STYI…AINS, GENI…SIGS, VKNV…RIKT, VEDI…VIEQ, and SNGV…DITG. D207 serves as the catalytic Proton donor. Residues C209 and C225 are joined by a disulfide bond. Residue H229 is part of the active site. N-linked (GlcNAc...) asparagine glycosylation is present at N246. Intrachain disulfides connect C335/C340 and C359/C368.

This sequence belongs to the glycosyl hydrolase 28 family.

The protein localises to the secreted. It carries out the reaction (1,4-alpha-D-galacturonosyl)n+m + H2O = (1,4-alpha-D-galacturonosyl)n + (1,4-alpha-D-galacturonosyl)m.. Involved in maceration and soft-rotting of plant tissue. Hydrolyzes the 1,4-alpha glycosidic bonds of de-esterified pectate in the smooth region of the plant cell wall. The chain is Probable endopolygalacturonase A (pgaA) from Aspergillus kawachii (strain NBRC 4308) (White koji mold).